The following is a 509-amino-acid chain: Dihydrolipoyl dehydrogenase, mitochondrial (509 aa).

Residues 1–35 constitute a mitochondrion transit peptide; sequence MQSWSRVYCTLAKRGHFNRIAHGLQGVSAVPLRTY. At lysine 66 the chain carries N6-acetyllysine; alternate. Lysine 66 is modified (N6-succinyllysine; alternate). Residues 71 to 80 and lysine 89 each bind FAD; that span reads EKNETLGGTC. A disulfide bond links cysteine 80 and cysteine 85. N6-acetyllysine; alternate occurs at positions 104, 122, 132, and 143. An N6-succinyllysine; alternate mark is found at lysine 104, lysine 122, lysine 132, and lysine 143. Glycine 154 serves as a coordination point for FAD. N6-succinyllysine occurs at positions 159 and 166. FAD is bound at residue 183–185; it reads TGS. Residues 220–227 and glutamate 243 contribute to the NAD(+) site; that span reads GAGVIGVE. 2 positions are modified to N6-succinyllysine: lysine 273 and lysine 277. Valine 278 serves as a coordination point for NAD(+). 2 positions are modified to phosphoserine: serine 285 and serine 297. Glycine 314 lines the NAD(+) pocket. Position 346 is an N6-acetyllysine (lysine 346). FAD contacts are provided by residues aspartate 355 and 361 to 364; that span reads MLAH. N6-acetyllysine; alternate is present on lysine 410. Lysine 410 carries the N6-succinyllysine; alternate modification. N6-acetyllysine occurs at positions 417 and 420. Position 430 is an N6-succinyllysine (lysine 430). Histidine 487 (proton acceptor) is an active-site residue. Residue serine 502 is modified to Phosphoserine. Position 505 is an N6-acetyllysine; alternate (lysine 505). The residue at position 505 (lysine 505) is an N6-succinyllysine; alternate.

The protein belongs to the class-I pyridine nucleotide-disulfide oxidoreductase family. Homodimer. Part of the multimeric pyruvate dehydrogenase complex that contains multiple copies of pyruvate dehydrogenase (subunits PDHA (PDHA1 or PDHA2) and PDHB, E1), dihydrolipoamide acetyltransferase (DLAT, E2) and lipoamide dehydrogenase (DLD, E3). These subunits are bound to an inner core composed of about 48 DLAT and 12 PDHX molecules (by non covalent bonds). The 2-oxoglutarate dehydrogenase complex is composed of OGDH (2-oxoglutarate dehydrogenase; E1), DLST (dihydrolipoamide succinyltransferase; E2), DLD (dihydrolipoamide dehydrogenase; E3) and the assembly factor KGD4. It contains multiple copies of the three enzymatic components (E1, E2 and E3). In the nucleus, the 2-oxoglutarate dehydrogenase complex associates with KAT2A. Interacts with PDHX. It depends on FAD as a cofactor. In terms of processing, tyrosine phosphorylated. In terms of tissue distribution, expressed in heart (at protein level).

It localises to the mitochondrion matrix. Its subcellular location is the nucleus. The protein localises to the cell projection. The protein resides in the cilium. It is found in the flagellum. It localises to the cytoplasmic vesicle. Its subcellular location is the secretory vesicle. The protein localises to the acrosome. The enzyme catalyses N(6)-[(R)-dihydrolipoyl]-L-lysyl-[protein] + NAD(+) = N(6)-[(R)-lipoyl]-L-lysyl-[protein] + NADH + H(+). Lipoamide dehydrogenase is a component of the glycine cleavage system as well as an E3 component of three alpha-ketoacid dehydrogenase complexes (pyruvate-, alpha-ketoglutarate-, and branched-chain amino acid-dehydrogenase complex). The 2-oxoglutarate dehydrogenase complex is mainly active in the mitochondrion. A fraction of the 2-oxoglutarate dehydrogenase complex also localizes in the nucleus and is required for lysine succinylation of histones: associates with KAT2A on chromatin and provides succinyl-CoA to histone succinyltransferase KAT2A. In monomeric form may have additional moonlighting function as serine protease. Involved in the hyperactivation of spermatazoa during capacitation and in the spermatazoal acrosome reaction. The polypeptide is Dihydrolipoyl dehydrogenase, mitochondrial (DLD) (Sus scrofa (Pig)).